A 100-amino-acid polypeptide reads, in one-letter code: Aspartyl/glutamyl-tRNA(Asn/Gln) amidotransferase subunit C (100 aa).

The protein belongs to the GatC family. In terms of assembly, heterotrimer of A, B and C subunits.

It carries out the reaction L-glutamyl-tRNA(Gln) + L-glutamine + ATP + H2O = L-glutaminyl-tRNA(Gln) + L-glutamate + ADP + phosphate + H(+). It catalyses the reaction L-aspartyl-tRNA(Asn) + L-glutamine + ATP + H2O = L-asparaginyl-tRNA(Asn) + L-glutamate + ADP + phosphate + 2 H(+). Allows the formation of correctly charged Asn-tRNA(Asn) or Gln-tRNA(Gln) through the transamidation of misacylated Asp-tRNA(Asn) or Glu-tRNA(Gln) in organisms which lack either or both of asparaginyl-tRNA or glutaminyl-tRNA synthetases. The reaction takes place in the presence of glutamine and ATP through an activated phospho-Asp-tRNA(Asn) or phospho-Glu-tRNA(Gln). The sequence is that of Aspartyl/glutamyl-tRNA(Asn/Gln) amidotransferase subunit C from Streptococcus pneumoniae (strain JJA).